The following is a 429-amino-acid chain: CinA-like protein (429 aa).

The protein belongs to the CinA family.

The protein is CinA-like protein of Chlorobium limicola (strain DSM 245 / NBRC 103803 / 6330).